Here is a 108-residue protein sequence, read N- to C-terminus: Thioredoxin (108 aa).

One can recognise a Thioredoxin domain in the interval Ser2–Ile108. Cys33 and Cys36 form a disulfide bridge.

Belongs to the thioredoxin family.

Its function is as follows. Participates in various redox reactions through the reversible oxidation of its active center dithiol to a disulfide and catalyzes dithiol-disulfide exchange reactions. This Pseudomonas aeruginosa (strain ATCC 15692 / DSM 22644 / CIP 104116 / JCM 14847 / LMG 12228 / 1C / PRS 101 / PAO1) protein is Thioredoxin (trxA).